The primary structure comprises 263 residues: MSDTEEVEHGEEEYEEEAHEAEEVHEEEVHEPAPPPEEAPEEEEKPRIKLTAPKIPEGEKVDFDDIQKKRQNKDLIELQALIDSHFEARRKEEEELVALKERIEKRRAERAEQQRIRAEKEKERQARLAEEKARREEEDAKRKAEDDLKKKKALSSMGASYSSYLAKADQKRGKKQTARETKKKVLAERRKPLNIDHLNEDKLRDKAKELWDWLYQLQTEKYDFAEQIKRKKYEIVTLRNRIDQAQKHSKKAGAKGKVGGRWK.

Residues 1 to 26 (MSDTEEVEHGEEEYEEEAHEAEEVHE) show a composition bias toward acidic residues. Disordered stretches follow at residues 1 to 66 (MSDT…FDDI), 107 to 188 (RAER…VLAE), and 243 to 263 (DQAQ…GRWK). Serine 2 is modified (N-acetylserine). Composition is skewed to basic and acidic residues over residues 56–66 (PEGEKVDFDDI), 107–149 (RAER…DDLK), and 177–188 (TARETKKKVLAE). Basic residues predominate over residues 247-263 (KHSKKAGAKGKVGGRWK).

Belongs to the troponin T family.

Its function is as follows. Troponin T is the tropomyosin-binding subunit of troponin, the thin filament regulatory complex which confers calcium-sensitivity to striated muscle actomyosin ATPase activity. In Gallus gallus (Chicken), this protein is Troponin T, fast skeletal muscle isoforms (TNNT3).